Reading from the N-terminus, the 61-residue chain is UPF0434 protein PST_2635 (61 aa).

This sequence belongs to the UPF0434 family.

The protein is UPF0434 protein PST_2635 of Stutzerimonas stutzeri (strain A1501) (Pseudomonas stutzeri).